We begin with the raw amino-acid sequence, 749 residues long: Serine/threonine-protein phosphatase 4 regulatory subunit 3 (749 aa).

In terms of assembly, regulatory subunit 3 (R3) of the histone H2A phosphatase complex (HTP-C) consisting of PPH3, PSY2 and PSY4.

The protein localises to the nucleus. In terms of biological role, core regulatory subunit of the histone H2A phosphatase complex, which dephosphorylates H2AS128ph (gamma-H2A) that has been displaced from sites of DNA lesions in the double-stranded DNA break repair process. Dephosphorylation is necessary for efficient recovery from the DNA damage checkpoint. The protein is Serine/threonine-protein phosphatase 4 regulatory subunit 3 (PSY2) of Kluyveromyces lactis (strain ATCC 8585 / CBS 2359 / DSM 70799 / NBRC 1267 / NRRL Y-1140 / WM37) (Yeast).